The primary structure comprises 82 residues: Immediate early response 3-interacting protein 1 (82 aa).

A run of 2 helical transmembrane segments spans residues 2-22 (AFTL…IAVL) and 62-82 (VMRV…LLFG).

Belongs to the YOS1 family.

It localises to the endoplasmic reticulum membrane. Its function is as follows. Regulator of endoplasmic reticulum secretion that acts as a key determinant of brain size. Required for secretion of extracellular matrix proteins. Required for correct brain development by depositing sufficient extracellular matrix proteins for tissue integrity and the proliferation of neural progenitors. Acts as a regulator of the unfolded protein response (UPR). The protein is Immediate early response 3-interacting protein 1 of Danio rerio (Zebrafish).